Reading from the N-terminus, the 201-residue chain is Ribosomal RNA large subunit methyltransferase E (201 aa).

5 residues coordinate S-adenosyl-L-methionine: Gly49, Trp51, Asp69, Asp90, and Asp113. Lys153 acts as the Proton acceptor in catalysis.

Belongs to the class I-like SAM-binding methyltransferase superfamily. RNA methyltransferase RlmE family.

It is found in the cytoplasm. The enzyme catalyses uridine(2552) in 23S rRNA + S-adenosyl-L-methionine = 2'-O-methyluridine(2552) in 23S rRNA + S-adenosyl-L-homocysteine + H(+). Functionally, specifically methylates the uridine in position 2552 of 23S rRNA at the 2'-O position of the ribose in the fully assembled 50S ribosomal subunit. The polypeptide is Ribosomal RNA large subunit methyltransferase E (Desulfotalea psychrophila (strain LSv54 / DSM 12343)).